The primary structure comprises 429 residues: Fez family zinc finger protein 1 (429 aa).

The Engrailed homology 1 repressor signature appears at 29–44 (PLAFSIERIMARTPEP). 6 consecutive C2H2-type zinc fingers follow at residues 247–269 (FTCEVCGKVFNAHYNLTRHMPVH), 275–297 (FVCKVCGKGFRQASTLCRHKIIH), 303–325 (HKCNQCGKAFNRSSTLNTHTRIH), 331–353 (FICEFCGKGFHQKGNYKNHKLTH), 359–381 (FKCNICNKAFHQVYNLTFHMHTH), and 387–410 (FTCPTCGKGFCRNFDLKKHIRKLH). The tract at residues 409–429 (LHDISPGPHSPPTPTGNTEGQ) is disordered.

This sequence belongs to the krueppel C2H2-type zinc-finger protein family.

The protein localises to the nucleus. Functionally, transcription repressor. Involved in the development of the forebrain region. The sequence is that of Fez family zinc finger protein 1 (fezf1) from Danio rerio (Zebrafish).